The chain runs to 353 residues: Guanine nucleotide-binding protein subunit alpha (353 aa).

Glycine 2 is lipidated: N-myristoyl glycine. The S-palmitoyl cysteine moiety is linked to residue cysteine 3. Positions 33-353 constitute a G-alpha domain; sequence NEIKMLLLGA…QLHLRECGLL (321 aa). Positions 36–49 are G1 motif; it reads KMLLLGAGESGKST. GTP contacts are provided by glutamate 44, serine 45, glycine 46, lysine 47, serine 48, threonine 49, aspartate 150, leucine 175, threonine 181, glycine 203, asparagine 269, lysine 270, aspartate 272, and alanine 325. Residue serine 48 participates in Mg(2+) binding. Residues 173–181 are G2 motif; that stretch reads DILRSRVKT. Threonine 181 lines the Mg(2+) pocket. The tract at residues 196–205 is G3 motif; that stretch reads YKLFDVGGQR. The interval 265-272 is G4 motif; sequence ILFLNKID. The tract at residues 323–328 is G5 motif; it reads TCATDT.

Belongs to the G-alpha family. G(q) subfamily. In terms of assembly, g proteins are composed of 3 units; alpha, beta and gamma. The alpha chain contains the guanine nucleotide binding site. Mg(2+) is required as a cofactor.

Its function is as follows. Guanine nucleotide-binding proteins (G proteins) are involved as modulators or transducers in various transmembrane signaling systems. The protein is Guanine nucleotide-binding protein subunit alpha (CGP1) of Coprinellus congregatus (Inky cap fungus).